A 343-amino-acid polypeptide reads, in one-letter code: Protein RecA (343 aa).

68–75 contributes to the ATP binding site; sequence GPESGGKT.

Belongs to the RecA family.

It is found in the cytoplasm. Its function is as follows. Can catalyze the hydrolysis of ATP in the presence of single-stranded DNA, the ATP-dependent uptake of single-stranded DNA by duplex DNA, and the ATP-dependent hybridization of homologous single-stranded DNAs. It interacts with LexA causing its activation and leading to its autocatalytic cleavage. This chain is Protein RecA, found in Syntrophus aciditrophicus (strain SB).